Consider the following 37-residue polypeptide: Photosystem I reaction center subunit IX (37 aa).

The helical transmembrane segment at 4 to 24 (FLSSAPVLLTAMMVFTAGLLI) threads the bilayer.

This sequence belongs to the PsaJ family.

It is found in the cellular thylakoid membrane. In terms of biological role, may help in the organization of the PsaE and PsaF subunits. The polypeptide is Photosystem I reaction center subunit IX (Picosynechococcus sp. (strain ATCC 27264 / PCC 7002 / PR-6) (Agmenellum quadruplicatum)).